The primary structure comprises 228 residues: Sugar fermentation stimulation protein homolog (228 aa).

Belongs to the SfsA family.

In Psychromonas ingrahamii (strain DSM 17664 / CCUG 51855 / 37), this protein is Sugar fermentation stimulation protein homolog.